The chain runs to 303 residues: Glutamate formimidoyltransferase (303 aa).

H81 functions as the For formimidoyltransferase activity in the catalytic mechanism. Folate is bound at residue 164-172 (GPSVVGKAG).

The protein belongs to the formiminotransferase family.

The protein resides in the cytoplasm. It catalyses the reaction (6S)-5-formyl-5,6,7,8-tetrahydrofolate + L-glutamate = N-formyl-L-glutamate + (6S)-5,6,7,8-tetrahydrofolate + H(+). It carries out the reaction 5-formimidoyltetrahydrofolate + L-glutamate = N-formimidoyl-L-glutamate + (6S)-5,6,7,8-tetrahydrofolate. The enzyme catalyses (6S)-5-formyl-5,6,7,8-tetrahydrofolate + ATP = (6R)-5,10-methenyltetrahydrofolate + ADP + phosphate. It participates in amino-acid degradation; L-histidine degradation into L-glutamate; L-glutamate from N-formimidoyl-L-glutamate (transferase route): step 1/1. It functions in the pathway one-carbon metabolism; tetrahydrofolate interconversion. In terms of biological role, catalyzes the transfer of the formyl group from N-formylglutamate to tetrahydrofolate (THF) to yield 5-formyltetrahydrofolate (5-CHO-THF) and glutamate (Glu). The triglutamate form of 5-CHO-THF (5-CHO-THF-Glu3) can also be used as substrate. It can also catalyze the transfer of the formimino group from N-formiminoglutamate to tetrahydrofolate (THF) to yield 5-formiminotetrahydrofolate (5-NH=CH-THF) and glutamate (Glu). It can replace YgfA to catalyze the irreversible ATP-dependent transformation of 5-CHO-THF to form 5,10-methenyltetrahydrofolate (5,10-CH=THF). The sequence is that of Glutamate formimidoyltransferase from Thermoplasma acidophilum (strain ATCC 25905 / DSM 1728 / JCM 9062 / NBRC 15155 / AMRC-C165).